The following is a 677-amino-acid chain: DNA ligase (677 aa).

Residues 35-39, 85-86, and E110 contribute to the NAD(+) site; these read DAEFD and SL. Catalysis depends on K112, which acts as the N6-AMP-lysine intermediate. Residues R133 and E173 each contribute to the NAD(+) site. The interval 189–210 is disordered; it reads QKEGGKPFANPRNAAAGSLRQK. K289 and K313 together coordinate NAD(+). Positions 407, 410, 426, and 432 each coordinate Zn(2+). One can recognise a BRCT domain in the interval 596 to 677; sequence IPDQVLEGLT…FKQLLANGTV (82 aa).

It belongs to the NAD-dependent DNA ligase family. LigA subfamily. Requires Mg(2+) as cofactor. It depends on Mn(2+) as a cofactor.

It carries out the reaction NAD(+) + (deoxyribonucleotide)n-3'-hydroxyl + 5'-phospho-(deoxyribonucleotide)m = (deoxyribonucleotide)n+m + AMP + beta-nicotinamide D-nucleotide.. Functionally, DNA ligase that catalyzes the formation of phosphodiester linkages between 5'-phosphoryl and 3'-hydroxyl groups in double-stranded DNA using NAD as a coenzyme and as the energy source for the reaction. It is essential for DNA replication and repair of damaged DNA. This is DNA ligase from Corynebacterium diphtheriae (strain ATCC 700971 / NCTC 13129 / Biotype gravis).